A 778-amino-acid chain; its full sequence is Arf-GAP with coiled-coil, ANK repeat and PH domain-containing protein 2 (778 aa).

The 226-residue stretch at 1 to 226 (MKMTVDFEEC…MKDLGAQLDR (226 aa)) folds into the BAR domain. Residues 266–361 (GIVMEGYLFK…WIKAVQTSIA (96 aa)) form the PH domain. Positions 371–391 (SEKLDKKSSPSTGSLDSGNES) are disordered. Residues 379–388 (SPSTGSLDSG) are compositionally biased toward polar residues. Phosphoserine occurs at positions 384 and 387. Residues 399-520 (ESALQRVQCI…KFVDKYSISL (122 aa)) form the Arf-GAP domain. A C4-type zinc finger spans residues 414–437 (CCDCGLADPRWASINLGITLCIEC). S521 is modified (phosphoserine). Residues 540–599 (SISKFGPGDQVRASAQSSVRSNDSGIQQSSDDGRESLPSTVSANSLYEPEGERQDSSMFL) form a disordered region. The span at 552 to 569 (ASAQSSVRSNDSGIQQSS) shows a compositional bias: polar residues. 2 positions are modified to phosphoserine: S581 and S584. ANK repeat units follow at residues 640 to 669 (NKATPLIQAVLGGSLVTCEFLLQNGANVNQ), 673 to 702 (QGRGPLHHATVLGHTGQVCLFLKRGANQHA), and 706 to 735 (EGKDPLSIAVEAANADIVTLLRLARMNEEM). The residue at position 742 (Y742) is a Phosphotyrosine. Phosphoserine is present on S775.

Interacts (via KANK domains) with RAB35 (GTP-bound form); the interaction is direct and probably recruits ACAP2 to membranes including plasma membrane. Interacts with MICALL1; the interaction is indirect through RAB35. As to expression, widely expressed. Highest level in lung.

Its subcellular location is the cell membrane. It localises to the endosome membrane. Its activity is regulated as follows. GAP activity stimulated by phosphatidylinositol 4,5-bisphosphate (PIP2) and phosphatidic acid. Functionally, GTPase-activating protein (GAP) for ADP ribosylation factor 6 (ARF6). Doesn't show GAP activity for RAB35. The chain is Arf-GAP with coiled-coil, ANK repeat and PH domain-containing protein 2 (ACAP2) from Homo sapiens (Human).